The sequence spans 162 residues: N5-carboxyaminoimidazole ribonucleotide mutase (162 aa).

Substrate is bound by residues Ser11, Asp14, and Arg41.

Belongs to the AIR carboxylase family. Class I subfamily.

The catalysed reaction is 5-carboxyamino-1-(5-phospho-D-ribosyl)imidazole + H(+) = 5-amino-1-(5-phospho-D-ribosyl)imidazole-4-carboxylate. The protein operates within purine metabolism; IMP biosynthesis via de novo pathway; 5-amino-1-(5-phospho-D-ribosyl)imidazole-4-carboxylate from 5-amino-1-(5-phospho-D-ribosyl)imidazole (N5-CAIR route): step 2/2. In terms of biological role, catalyzes the conversion of N5-carboxyaminoimidazole ribonucleotide (N5-CAIR) to 4-carboxy-5-aminoimidazole ribonucleotide (CAIR). The polypeptide is N5-carboxyaminoimidazole ribonucleotide mutase (Brucella melitensis biotype 1 (strain ATCC 23456 / CCUG 17765 / NCTC 10094 / 16M)).